Reading from the N-terminus, the 67-residue chain is Small ribosomal subunit protein eS31 (67 aa).

Positions 31, 34, 49, and 52 each coordinate Zn(2+). A C4-type zinc finger spans residues 31–52 (CPKCGAGVFMAEHLNRFACGKC).

Belongs to the eukaryotic ribosomal protein eS31 family. In terms of assembly, part of the 30S ribosomal subunit. Zn(2+) serves as cofactor.

The chain is Small ribosomal subunit protein eS31 from Methanococcus maripaludis (strain DSM 14266 / JCM 13030 / NBRC 101832 / S2 / LL).